A 433-amino-acid chain; its full sequence is Mitochondrial inner membrane protein OXA1L (433 aa).

Residues 1–108 lie on the Mitochondrial intermembrane side of the membrane; that stretch reads MARNLVCGRW…QCATEPSFTE (108 aa). Residues 109–129 traverse the membrane as a helical segment; sequence LGLGSYTPVGLIQNLLEYIHV. The Mitochondrial matrix segment spans residues 130 to 134; it reads DLGLP. Residues 135 to 155 traverse the membrane as a helical segment; that stretch reads WWGAIATCTVLARCLVFPLIV. The Mitochondrial intermembrane portion of the chain corresponds to 156–207; the sequence is KGQREAAKIHNHMPEMQKFSARIREAKLAGDQAEFYKATIEMTRYQKKHDIK. A helical transmembrane segment spans residues 208–228; the sequence is LLRPLILPLTQAPVFISFFIA. Residues 229–255 are Mitochondrial matrix-facing; the sequence is LREMANLPVPSLQTGGLWWFQDLTVSD. The helical transmembrane segment at 256–276 threads the bilayer; sequence PIYVLPLVVTATMWCVLELGA. The Mitochondrial intermembrane portion of the chain corresponds to 277 to 293; it reads ETGVQSNDLQFMRNIIR. The chain crosses the membrane as a helical span at residues 294–314; the sequence is VMPLVVLPVTIHFPSAVFMYW. The Mitochondrial matrix portion of the chain corresponds to 315-433; the sequence is LSSNVFSLCQ…AKKPWQDTLG (119 aa). Ser359 is modified (phosphoserine). Residues Thr395 and Thr397 each carry the phosphothreonine modification. The tract at residues 397–433 is disordered; it reads THNPLLQHDPSHPPKAPNSNNSSIKANAKKPWQDTLG. The segment covering 413–426 has biased composition (low complexity); sequence PNSNNSSIKANAKK.

It belongs to the OXA1/ALB3/YidC family. As to quaternary structure, monomer; predominantly monomeric at low salt concentrations. Homooligomer; predominantly homooligomeric at high salt concentrations. Associates with the mitochondrial ribosome. Associates preferentially as a dimer with the large ribosomal subunit 39S of the mitochondrial ribosome. Interacts with OXA1L; promoting cotranslational quality control in mitochondria.

It localises to the mitochondrion inner membrane. Mitochondrial membrane insertase that mediates the cotranslational insertion of integral membrane proteins into the mitochondrial inner membrane. Essential for the activity and assembly of cytochrome oxidase. Required for the correct biogenesis of ATP synthase and complex I in mitochondria. This Mus musculus (Mouse) protein is Mitochondrial inner membrane protein OXA1L (Oxa1l).